We begin with the raw amino-acid sequence, 522 residues long: MSFGASFVSFLNAMMTFEEEKMQLACDDLKTTEKLCESEEAGVIETIKNKIKKNVDARKSTPSMVDRLQRQIIIADCQVYLAVLSFVKQELSAYIKGGWILRKAWKIYNKCYVDINALQELHQKTLTEEPLSSDAANDNHIVAEGVTEEALSRLKGAVSFGYGLFHLCISMVPPNLLKIINLLGFPGDRLQGLSSLTYASESKDMKAPLATLALLWYHTVVRPFFALDGSDNKGGLDEAKAILLRKESAYPNSSLFMFFKGRIQRLECQINSALTSFHTALELAVDQREIQHVCLYEIGWCSMIELNFKDAFDSFERLKNESRWSQCYYAYLTAVCQGATGDVDGAQLIFKEVQKLFKRKNNQIEQFSVKKAERFRKQTPTRALCVLASIEVLYLWKALPNCSLPNLQRMSQACHEVDDSSVVGLKHLLLGAIHKCLGNSQDAVQFFQRAAKDESCRQNNSYVQPYACYELGCLLLDRAETVARGRTLLLQAKEDFSGYDFENRLHVRVHAALASLRELVPQ.

TPR repeat units lie at residues Ser254–Gln287, His292–Ser325, and Gly424–Arg457.

Belongs to the TTC39 family.

This Rattus norvegicus (Rat) protein is Tetratricopeptide repeat protein 39C (Ttc39c).